The chain runs to 94 residues: Protein LURE 1.1 (94 aa).

A signal peptide spans 1–19 (MKLIFIFLTLLIFVSSCTS). Cystine bridges form between Cys58-Cys75, Cys61-Cys82, and Cys65-Cys84. The segment at 67-87 (RRDRYIRTCSFERKLCRCSYS) is PRK6 binding.

It belongs to the DEFL family. As to quaternary structure, binds to PRK6 LRRs. As to expression, expressed in the pistil. Detected exclusively in the synergid cells.

The protein localises to the secreted. Functionally, pollen tube attractants guiding pollen tubes to the ovular micropyle. This Arabidopsis thaliana (Mouse-ear cress) protein is Protein LURE 1.1.